The chain runs to 221 residues: MGRRPARCYRQIKGKPYPKSRYCRGVPDPKIRIYDVGMKRKGVDEFPYCVHLVSWEKENVSSEALEAARIACNKYMVKSAGKDAFHLRIRVHPFHVLRINKMLSCAGADRLQTGMRGAFGKALGTCARVAIGQVLLSVRCKDAHGHHAQEALRRAKFKFPGRQKIIVSRKWGFTKFNRADYTKLRQEKRIVPDGVNAKFLSCHGPLANRQPGSAFLSAGAQ.

This sequence belongs to the universal ribosomal protein uL16 family. In terms of assembly, component of the small ribosomal subunit. Mature ribosomes consist of a small (40S) and a large (60S) subunit. The 40S subunit contains about 33 different proteins and 1 molecule of RNA (18S). The 60S subunit contains about 49 different proteins and 3 molecules of RNA (25S, 5.8S and 5S).

This Arabidopsis thaliana (Mouse-ear cress) protein is Large ribosomal subunit protein uL16y (RPL10B).